The following is a 351-amino-acid chain: Probable aldo-keto reductase 2 (351 aa).

Tyrosine 67 (proton donor) is an active-site residue. Histidine 134 serves as a coordination point for substrate. An NADP(+)-binding site is contributed by 213-223 (SPLGRGFFSAG). The segment at 317 to 351 (YASTDDVRGDRYPQAMANTTWQNSETPPLSSWKAQ) is disordered. Polar residues predominate over residues 332 to 351 (MANTTWQNSETPPLSSWKAQ).

The protein belongs to the aldo/keto reductase family.

The polypeptide is Probable aldo-keto reductase 2 (Oryza sativa subsp. japonica (Rice)).